Here is a 317-residue protein sequence, read N- to C-terminus: Glycerol-3-phosphate dehydrogenase [NAD(P)+] (317 aa).

Residues Trp20, Arg40, Arg41, and Lys88 each contribute to the NADPH site. The sn-glycerol 3-phosphate site is built by Lys88 and Gly116. Ser120 serves as a coordination point for NADPH. Lys171, Asp224, Ser234, Arg235, and Asn236 together coordinate sn-glycerol 3-phosphate. Lys171 serves as the catalytic Proton acceptor. Arg235 provides a ligand contact to NADPH. Position 261 (Glu261) interacts with NADPH.

It belongs to the NAD-dependent glycerol-3-phosphate dehydrogenase family.

Its subcellular location is the cytoplasm. The catalysed reaction is sn-glycerol 3-phosphate + NAD(+) = dihydroxyacetone phosphate + NADH + H(+). It catalyses the reaction sn-glycerol 3-phosphate + NADP(+) = dihydroxyacetone phosphate + NADPH + H(+). The protein operates within membrane lipid metabolism; glycerophospholipid metabolism. Its function is as follows. Catalyzes the reduction of the glycolytic intermediate dihydroxyacetone phosphate (DHAP) to sn-glycerol 3-phosphate (G3P), the key precursor for phospholipid synthesis. The polypeptide is Glycerol-3-phosphate dehydrogenase [NAD(P)+] (Synechocystis sp. (strain ATCC 27184 / PCC 6803 / Kazusa)).